Consider the following 161-residue polypeptide: Dermonecrotic toxin LarSicTox-alphaI-1 (161 aa).

Belongs to the arthropod phospholipase D family. Class II subfamily. Requires Mg(2+) as cofactor. Contains 2 disulfide bonds. Expressed by the venom gland.

Its subcellular location is the secreted. It carries out the reaction an N-(acyl)-sphingosylphosphocholine = an N-(acyl)-sphingosyl-1,3-cyclic phosphate + choline. It catalyses the reaction an N-(acyl)-sphingosylphosphoethanolamine = an N-(acyl)-sphingosyl-1,3-cyclic phosphate + ethanolamine. The enzyme catalyses a 1-acyl-sn-glycero-3-phosphocholine = a 1-acyl-sn-glycero-2,3-cyclic phosphate + choline. The catalysed reaction is a 1-acyl-sn-glycero-3-phosphoethanolamine = a 1-acyl-sn-glycero-2,3-cyclic phosphate + ethanolamine. Its function is as follows. Dermonecrotic toxins cleave the phosphodiester linkage between the phosphate and headgroup of certain phospholipids (sphingolipid and lysolipid substrates), forming an alcohol (often choline) and a cyclic phosphate. This toxin acts on sphingomyelin (SM). It may also act on ceramide phosphoethanolamine (CPE), lysophosphatidylcholine (LPC) and lysophosphatidylethanolamine (LPE), but not on lysophosphatidylserine (LPS), and lysophosphatidylglycerol (LPG). It acts by transphosphatidylation, releasing exclusively cyclic phosphate products as second products. Induces dermonecrosis, hemolysis, increased vascular permeability, edema, inflammatory response, and platelet aggregation. The chain is Dermonecrotic toxin LarSicTox-alphaI-1 from Loxosceles arizonica (Arizona brown spider).